The primary structure comprises 396 residues: Acetate kinase (396 aa).

Mg(2+) is bound at residue Asn-8. Lys-15 lines the ATP pocket. Arg-89 provides a ligand contact to substrate. The active-site Proton donor/acceptor is Asp-146. Residues 206-210 (HIGNG), 283-285 (DMR), and 331-335 (GVGEN) contribute to the ATP site. Mg(2+) is bound at residue Glu-383.

The protein belongs to the acetokinase family. Homodimer. Mg(2+) is required as a cofactor. Requires Mn(2+) as cofactor.

It is found in the cytoplasm. The enzyme catalyses acetate + ATP = acetyl phosphate + ADP. It functions in the pathway metabolic intermediate biosynthesis; acetyl-CoA biosynthesis; acetyl-CoA from acetate: step 1/2. In terms of biological role, catalyzes the formation of acetyl phosphate from acetate and ATP. Can also catalyze the reverse reaction. This is Acetate kinase from Streptococcus pneumoniae (strain 70585).